The following is a 301-amino-acid chain: NADH-ubiquinone oxidoreductase chain 1 (301 aa).

The next 8 helical transmembrane spans lie at 4-24, 62-82, 96-116, 140-160, 165-185, 216-236, 247-267, and 279-299; these read IIPI…VLGY, LALF…MWIP, ILFM…SGWA, LAII…STLI, YTWL…STIA, LFFL…IILF, EMYT…FLWI, and LMHL…MWHV.

The protein belongs to the complex I subunit 1 family.

It is found in the mitochondrion inner membrane. It carries out the reaction a ubiquinone + NADH + 5 H(+)(in) = a ubiquinol + NAD(+) + 4 H(+)(out). Functionally, core subunit of the mitochondrial membrane respiratory chain NADH dehydrogenase (Complex I) that is believed to belong to the minimal assembly required for catalysis. Complex I functions in the transfer of electrons from NADH to the respiratory chain. The immediate electron acceptor for the enzyme is believed to be ubiquinone. The protein is NADH-ubiquinone oxidoreductase chain 1 (MT-ND1) of Nyctalus noctula (Noctule bat).